Here is a 131-residue protein sequence, read N- to C-terminus: Small ribosomal subunit protein uS8 (131 aa).

The protein belongs to the universal ribosomal protein uS8 family. Part of the 30S ribosomal subunit. Contacts proteins S5 and S12.

In terms of biological role, one of the primary rRNA binding proteins, it binds directly to 16S rRNA central domain where it helps coordinate assembly of the platform of the 30S subunit. This chain is Small ribosomal subunit protein uS8, found in Halorhodospira halophila (strain DSM 244 / SL1) (Ectothiorhodospira halophila (strain DSM 244 / SL1)).